A 105-amino-acid chain; its full sequence is UPF0060 membrane protein Ajs_1326 (105 aa).

4 consecutive transmembrane segments (helical) span residues 4-24, 30-50, 60-80, and 82-102; these read FALF…PYLW, SAWL…LLTL, AAYG…VDGI, and PTAW…LIMF.

Belongs to the UPF0060 family.

The protein localises to the cell inner membrane. This chain is UPF0060 membrane protein Ajs_1326, found in Acidovorax sp. (strain JS42).